A 473-amino-acid chain; its full sequence is PPE family protein PPE37 (473 aa).

Residues 203–206 (DFLE) carry the Iron-binding motif motif. Helical transmembrane passes span 227–247 (VLDWFISFVSGPVFTFLAYLV) and 250–270 (PLIYFGPFAPLTSPVLLPAGL).

The protein belongs to the mycobacterial PPE family.

The protein resides in the cell membrane. Functionally, essential for efficient heme-iron acquisition (HIA). Binds iron. Strains with a functional PPE37 can utilize low concentrations of hemin very efficiently in broth and on agar plates. During infection, might interfere with the pro-inflammatory cytokine response in infected macrophages. Its function is as follows. In vitro, incubation of the protein in the presence of M.tuberculosis proteases leads to the cleavage of PPE37 into two segments, the N- and C-terminal segments. Transfection of human monocytic THP-1 cell lines with the N-terminal segment leads to the proliferation and differentiation of THP-1 cells into adherent stellate cells with dendritic cell-like morphology. Transfection of THP-1 cells with the C-terminal segment leads to the apoptosis of the cells. Recombinant protein antigens display strong B-cell response in tuberculosis patients and immunized mice. In Mycobacterium tuberculosis (strain ATCC 25618 / H37Rv), this protein is PPE family protein PPE37.